The chain runs to 339 residues: MFYKIAQKVMFQMDPERAHNLAIGSLKMTGNSPLNCFYRQTIAPAPVTFMGLTFPNPVGLAAGMDKDGESIDAFHAMGFGHIEVGTVTPRPQPGNDLPRLFRLKPAKGIINRMGFNNKGVDNLVRNLIAKKSDIMVGVNIGKNKDTPVEQGKDDYLICMDKVYPYAAYIAVNISSPNTPGLRSLQYGDLLDELLSAIKTKQLELAEKHKKYVPIALKIAPDLTIEEIENIADALIKNKFDGAIATNTTLTRDGVSGLANANESGGLSGKPLTELSTKVIRQLAACLKGQIPIIGVGGINSAEDALAKFDAGATMVQIYSGFIYQGPKLIKEIVEAYRLK.

FMN contacts are provided by residues 62–66 (AGMDK) and Thr-86. Lys-66 contributes to the substrate binding site. 111–115 (NRMGF) contributes to the substrate binding site. Residues Asn-139 and Asn-172 each coordinate FMN. Asn-172 is a binding site for substrate. Ser-175 (nucleophile) is an active-site residue. Asn-177 provides a ligand contact to substrate. Residues Lys-217 and Thr-245 each coordinate FMN. 246–247 (NT) serves as a coordination point for substrate. Residues Gly-268, Gly-297, and 318 to 319 (YS) each bind FMN.

Belongs to the dihydroorotate dehydrogenase family. Type 2 subfamily. Monomer. FMN is required as a cofactor.

It is found in the cell membrane. The catalysed reaction is (S)-dihydroorotate + a quinone = orotate + a quinol. Its pathway is pyrimidine metabolism; UMP biosynthesis via de novo pathway; orotate from (S)-dihydroorotate (quinone route): step 1/1. Catalyzes the conversion of dihydroorotate to orotate with quinone as electron acceptor. The sequence is that of Dihydroorotate dehydrogenase (quinone) from Shewanella putrefaciens (strain CN-32 / ATCC BAA-453).